We begin with the raw amino-acid sequence, 297 residues long: Ribosomal RNA small subunit methyltransferase H (297 aa).

S-adenosyl-L-methionine contacts are provided by residues 36-38, aspartate 56, leucine 90, aspartate 104, and histidine 111; that span reads GGH.

This sequence belongs to the methyltransferase superfamily. RsmH family.

It localises to the cytoplasm. The enzyme catalyses cytidine(1402) in 16S rRNA + S-adenosyl-L-methionine = N(4)-methylcytidine(1402) in 16S rRNA + S-adenosyl-L-homocysteine + H(+). Its function is as follows. Specifically methylates the N4 position of cytidine in position 1402 (C1402) of 16S rRNA. This chain is Ribosomal RNA small subunit methyltransferase H, found in Dictyoglomus thermophilum (strain ATCC 35947 / DSM 3960 / H-6-12).